A 295-amino-acid polypeptide reads, in one-letter code: Protease HtpX (295 aa).

Helical transmembrane passes span 4–24 and 41–61; these read ILLFVATNLAVVLVASITLSL and SSLLVFCAVFGFAGSLVSLFI. H147 contributes to the Zn(2+) binding site. The active site involves E148. H151 serves as a coordination point for Zn(2+). A run of 2 helical transmembrane segments spans residues 158-178 and 199-219; these read VTLALVQGVVNTFVMFFARII and VATIVAELVLGILASMIVMWF. Residue E224 coordinates Zn(2+).

Belongs to the peptidase M48B family. It depends on Zn(2+) as a cofactor.

It is found in the cell inner membrane. In Pseudomonas putida (strain W619), this protein is Protease HtpX.